Consider the following 612-residue polypeptide: Dihydroxy-acid dehydratase (612 aa).

Asp-81 is a Mg(2+) binding site. Cys-122 provides a ligand contact to [2Fe-2S] cluster. 2 residues coordinate Mg(2+): Asp-123 and Lys-124. Lys-124 carries the N6-carboxylysine modification. Residue Cys-195 coordinates [2Fe-2S] cluster. Residue Glu-491 participates in Mg(2+) binding. Ser-517 acts as the Proton acceptor in catalysis.

It belongs to the IlvD/Edd family. In terms of assembly, homodimer. [2Fe-2S] cluster is required as a cofactor. Requires Mg(2+) as cofactor.

The catalysed reaction is (2R)-2,3-dihydroxy-3-methylbutanoate = 3-methyl-2-oxobutanoate + H2O. It carries out the reaction (2R,3R)-2,3-dihydroxy-3-methylpentanoate = (S)-3-methyl-2-oxopentanoate + H2O. It participates in amino-acid biosynthesis; L-isoleucine biosynthesis; L-isoleucine from 2-oxobutanoate: step 3/4. It functions in the pathway amino-acid biosynthesis; L-valine biosynthesis; L-valine from pyruvate: step 3/4. Functionally, functions in the biosynthesis of branched-chain amino acids. Catalyzes the dehydration of (2R,3R)-2,3-dihydroxy-3-methylpentanoate (2,3-dihydroxy-3-methylvalerate) into 2-oxo-3-methylpentanoate (2-oxo-3-methylvalerate) and of (2R)-2,3-dihydroxy-3-methylbutanoate (2,3-dihydroxyisovalerate) into 2-oxo-3-methylbutanoate (2-oxoisovalerate), the penultimate precursor to L-isoleucine and L-valine, respectively. The sequence is that of Dihydroxy-acid dehydratase from Sinorhizobium fredii (strain NBRC 101917 / NGR234).